The primary structure comprises 287 residues: ATP phosphoribosyltransferase (287 aa).

It belongs to the ATP phosphoribosyltransferase family. Long subfamily. Equilibrium between an active dimeric form, an inactive hexameric form and higher aggregates. Interconversion between the various forms is largely reversible and is influenced by the natural substrates and inhibitors of the enzyme. Mg(2+) is required as a cofactor.

The protein resides in the cytoplasm. The enzyme catalyses 1-(5-phospho-beta-D-ribosyl)-ATP + diphosphate = 5-phospho-alpha-D-ribose 1-diphosphate + ATP. Its pathway is amino-acid biosynthesis; L-histidine biosynthesis; L-histidine from 5-phospho-alpha-D-ribose 1-diphosphate: step 1/9. With respect to regulation, feedback inhibited by histidine. Catalyzes the condensation of ATP and 5-phosphoribose 1-diphosphate to form N'-(5'-phosphoribosyl)-ATP (PR-ATP). Has a crucial role in the pathway because the rate of histidine biosynthesis seems to be controlled primarily by regulation of HisG enzymatic activity. The chain is ATP phosphoribosyltransferase (hisG) from Mycobacterium leprae (strain TN).